The primary structure comprises 256 residues: Ribosomal RNA small subunit methyltransferase J (256 aa).

Residues 101–102, 117–118, and Asp-174 contribute to the S-adenosyl-L-methionine site; these read RD and ER.

The protein belongs to the methyltransferase superfamily. RsmJ family.

It is found in the cytoplasm. The catalysed reaction is guanosine(1516) in 16S rRNA + S-adenosyl-L-methionine = N(2)-methylguanosine(1516) in 16S rRNA + S-adenosyl-L-homocysteine + H(+). Its function is as follows. Specifically methylates the guanosine in position 1516 of 16S rRNA. This is Ribosomal RNA small subunit methyltransferase J from Chromohalobacter salexigens (strain ATCC BAA-138 / DSM 3043 / CIP 106854 / NCIMB 13768 / 1H11).